A 485-amino-acid polypeptide reads, in one-letter code: Cysteine--tRNA ligase (485 aa).

Cys-27 contacts Zn(2+). Residues 29 to 39 (ITAYDLCHIGH) carry the 'HIGH' region motif. Zn(2+)-binding residues include Cys-208, His-233, and Glu-237. A 'KMSKS' region motif is present at residues 265–269 (KMSKS). Lys-268 contributes to the ATP binding site.

This sequence belongs to the class-I aminoacyl-tRNA synthetase family. Monomer. It depends on Zn(2+) as a cofactor.

The protein resides in the cytoplasm. The catalysed reaction is tRNA(Cys) + L-cysteine + ATP = L-cysteinyl-tRNA(Cys) + AMP + diphosphate. In Nitratidesulfovibrio vulgaris (strain ATCC 29579 / DSM 644 / CCUG 34227 / NCIMB 8303 / VKM B-1760 / Hildenborough) (Desulfovibrio vulgaris), this protein is Cysteine--tRNA ligase.